The chain runs to 163 residues: MKFFAVLALCIVGAIAHPLTSDEAALVKSSWAQVKHNEVDILYTVFKAYPDIQARFPQFAGKDLDTIKTSGQFATHATRIVSFLSELIALSGSESNLSAIYGLISKMGTDHKNRGITQTQFNKFRTALVSYISSNVAWGDNVAAAWTHALDNVYTAVFQIVTA.

The signal sequence occupies residues 1–16 (MKFFAVLALCIVGAIA). The 145-residue stretch at 18 to 162 (PLTSDEAALV…VYTAVFQIVT (145 aa)) folds into the Globin domain. His76 and His111 together coordinate heme b.

The protein belongs to the globin family.

This Chironomus thummi thummi (Midge) protein is Globin CTT-Z (CTT-Z).